The following is a 302-amino-acid chain: Homoserine O-acetyltransferase (302 aa).

Catalysis depends on cysteine 142, which acts as the Acyl-thioester intermediate. Residues lysine 163 and serine 192 each contribute to the substrate site. Histidine 235 functions as the Proton acceptor in the catalytic mechanism. Residue glutamate 237 is part of the active site. Arginine 249 is a substrate binding site.

It belongs to the MetA family.

The protein resides in the cytoplasm. The enzyme catalyses L-homoserine + acetyl-CoA = O-acetyl-L-homoserine + CoA. Its pathway is amino-acid biosynthesis; L-methionine biosynthesis via de novo pathway; O-acetyl-L-homoserine from L-homoserine: step 1/1. Transfers an acetyl group from acetyl-CoA to L-homoserine, forming acetyl-L-homoserine. This chain is Homoserine O-acetyltransferase, found in Geobacillus kaustophilus (strain HTA426).